The following is a 239-amino-acid chain: Increased recombination centers protein 22-1 (239 aa).

The first 19 residues, 1–19 (MKLSTIFTAFAATIATVAG), serve as a signal peptide directing secretion. Residues 20–161 (YETTGSKQTV…AAVSFFDPRL (142 aa)) lie on the Lumenal side of the membrane. The helical transmembrane segment at 162–182 (IFLELVLLITFAGLIYVGYEI) threads the bilayer. The Cytoplasmic segment spans residues 183–239 (WGKQYFKGVAPVKAKKVSAAKASSPVASGPSTTSATGYDTNWIPESHLKQKKTKKVN). Over residues 201–213 (AAKASSPVASGPS) the composition is skewed to low complexity. Residues 201-222 (AAKASSPVASGPSTTSATGYDT) form a disordered region.

This sequence belongs to the IRC22 family.

The protein localises to the endoplasmic reticulum membrane. Its function is as follows. Is probably involved in a pathway contributing to genomic integrity. This is Increased recombination centers protein 22-1 (IRC22-1) from Candida albicans (strain SC5314 / ATCC MYA-2876) (Yeast).